A 97-amino-acid polypeptide reads, in one-letter code: Putative membrane protein insertion efficiency factor (97 aa).

It belongs to the UPF0161 family.

Its subcellular location is the cell membrane. Its function is as follows. Could be involved in insertion of integral membrane proteins into the membrane. The polypeptide is Putative membrane protein insertion efficiency factor (Lactobacillus johnsonii (strain CNCM I-12250 / La1 / NCC 533)).